The chain runs to 371 residues: Probable diguanylate cyclase DgcC (371 aa).

5 helical membrane passes run 46–66, 68–88, 112–132, 143–163, and 171–191; these read AVGL…HPPP, WWWL…WQIA, WVGV…IMCL, FVAG…LTGI, and PLEW…FGWV. One can recognise a GGDEF domain in the interval 240–371; the sequence is RDATLLIIDI…AGRNRTEVAA (132 aa). Positions 248 and 249 each coordinate Mg(2+). Asn256 and Asp265 together coordinate substrate. Asp291 contributes to the Mg(2+) binding site.

It depends on Mg(2+) as a cofactor.

The protein localises to the cell inner membrane. It carries out the reaction 2 GTP = 3',3'-c-di-GMP + 2 diphosphate. The protein operates within purine metabolism; 3',5'-cyclic di-GMP biosynthesis. A probable diguanylate cyclase. The last member of a cascade of expressed proteins, its expression requires DgcM. DgcC production induces biosynthesis of cellulose in some E.coli isolates, but not in K12 strains. Cyclic-di-GMP is a second messenger which controls cell surface-associated traits in bacteria. The polypeptide is Probable diguanylate cyclase DgcC (Escherichia coli (strain K12)).